The primary structure comprises 346 residues: GTPase Obg (346 aa).

Positions 1-159 constitute an Obg domain; it reads MKFLDSAKIY…RTVLLRLKLI (159 aa). An OBG-type G domain is found at 160 to 327; that stretch reads ADAGLVGLPN…ALRAVLAEID (168 aa). GTP is bound by residues 166-173, 191-195, 212-215, 279-282, and 308-310; these read GLPNAGKS, FTTLN, DIPG, SKVD, and SAA. S173 and T193 together coordinate Mg(2+).

Belongs to the TRAFAC class OBG-HflX-like GTPase superfamily. OBG GTPase family. Monomer. The cofactor is Mg(2+).

It localises to the cytoplasm. Functionally, an essential GTPase which binds GTP, GDP and possibly (p)ppGpp with moderate affinity, with high nucleotide exchange rates and a fairly low GTP hydrolysis rate. Plays a role in control of the cell cycle, stress response, ribosome biogenesis and in those bacteria that undergo differentiation, in morphogenesis control. The sequence is that of GTPase Obg from Methylocella silvestris (strain DSM 15510 / CIP 108128 / LMG 27833 / NCIMB 13906 / BL2).